Here is a 213-residue protein sequence, read N- to C-terminus: Reticulon-3 (213 aa).

A compositionally biased stretch (polar residues) spans 1 to 16; sequence MADTSGPQSSHISSSA. Residues 1–20 are disordered; that stretch reads MADTSGPQSSHISSSAGEKG. Positions 25 to 213 constitute a Reticulon domain; sequence VQDLLYWRDV…LPGALKKKSE (189 aa). 2 consecutive transmembrane segments (helical) span residues 45–65 and 154–174; these read MVLLLSLAAFSIISVISYLVL and VFNGITLLILGVLLAFTAPIV.

In terms of assembly, homodimer.

The protein resides in the endoplasmic reticulum membrane. The protein localises to the golgi apparatus membrane. In terms of biological role, may be involved in membrane trafficking in the early secretory pathway. The sequence is that of Reticulon-3 (rtn3) from Xenopus tropicalis (Western clawed frog).